A 76-amino-acid chain; its full sequence is Acyl carrier protein (76 aa).

One can recognise a Carrier domain in the interval 1 to 76 (MAIFDDIKEV…DVVRYIETNK (76 aa)). Position 36 is an O-(pantetheine 4'-phosphoryl)serine (Ser-36).

This sequence belongs to the acyl carrier protein (ACP) family. 4'-phosphopantetheine is transferred from CoA to a specific serine of apo-ACP by AcpS. This modification is essential for activity because fatty acids are bound in thioester linkage to the sulfhydryl of the prosthetic group.

Its subcellular location is the cytoplasm. It functions in the pathway lipid metabolism; fatty acid biosynthesis. Carrier of the growing fatty acid chain in fatty acid biosynthesis. The sequence is that of Acyl carrier protein from Wolinella succinogenes (strain ATCC 29543 / DSM 1740 / CCUG 13145 / JCM 31913 / LMG 7466 / NCTC 11488 / FDC 602W) (Vibrio succinogenes).